The primary structure comprises 507 residues: Desmethyl-deoxy-podophyllotoxin synthase (507 aa).

The chain crosses the membrane as a helical span at residues 1 to 21 (MEFLSFPLSSALLIILLFMLV). Residue C440 participates in heme binding.

Belongs to the cytochrome P450 family. Heme is required as a cofactor. Rhizome-specific expression.

It localises to the membrane. The catalysed reaction is (-)-deoxypodophyllotoxin + reduced [NADPH--hemoprotein reductase] + O2 = (-)-4'-desmethyl-deoxypodophyllotoxin + formaldehyde + oxidized [NADPH--hemoprotein reductase] + H2O + H(+). It functions in the pathway aromatic compound metabolism; phenylpropanoid biosynthesis. Cytochrome P450 involved in the biosynthesis of etoposide, a chemotherapeutic compound of the topoisomerase inhibitor family. Catalyzes the conversion of deoxypodophyllotoxin to desmethyl-deoxypodophyllotoxin. The sequence is that of Desmethyl-deoxy-podophyllotoxin synthase from Sinopodophyllum hexandrum (Himalayan may apple).